A 255-amino-acid chain; its full sequence is Proliferating cell nuclear antigen 2 (255 aa).

Residues 61-80 (HCDRNVSLGLDLKSLGKVLK) mediate DNA binding.

Belongs to the PCNA family. As to quaternary structure, homotrimer. Interacts with the catalytic subunits of two DNA polymerase complexes: PolD1 in the delta complex and PolE1/DNApol-epsilon255 in the epsilon complex.

The protein localises to the nucleus. Its subcellular location is the chromosome. It localises to the cytoplasm. Functionally, likely to be an auxiliary protein of DNA polymerase delta complex and is probably involved in the control of DNA replication and repair by increasing the polymerase's processibility. May function independently of PCNA during DNA repair. The protein is Proliferating cell nuclear antigen 2 of Drosophila melanogaster (Fruit fly).